Reading from the N-terminus, the 90-residue chain is DNA-binding protein HU (90 aa).

This sequence belongs to the bacterial histone-like protein family. As to quaternary structure, homodimer.

In terms of biological role, histone-like DNA-binding protein which is capable of wrapping DNA to stabilize it, and thus to prevent its denaturation under extreme environmental conditions. The sequence is that of DNA-binding protein HU (hup) from Pasteurella multocida (strain Pm70).